Reading from the N-terminus, the 670-residue chain is Probable metal-nicotianamine transporter YSL4 (670 aa).

The next 13 helical transmembrane spans lie at 35–55 (ITIR…IITH), 59–79 (LTIG…FFFI), 107–127 (CVVS…LIAM), 151–171 (GLWW…FCLV), 273–293 (LVNC…WPFI), 318–338 (VFIA…KIIV), 389–409 (FAVS…PLIF), 416–436 (FVLC…YGAG), 450–470 (GLFI…GLAA), 507–527 (LGTA…WTAF), 559–579 (PKHC…VNLI), 601–621 (FYIG…MLVW), and 636–656 (VASG…ILSI).

The protein belongs to the YSL (TC 2.A.67.2) family.

The protein localises to the membrane. In terms of biological role, may be involved in the transport of nicotianamine-chelated metals. This is Probable metal-nicotianamine transporter YSL4 (YSL4) from Arabidopsis thaliana (Mouse-ear cress).